A 134-amino-acid polypeptide reads, in one-letter code: Protein YhfA (134 aa).

The polypeptide is Protein YhfA (yhfA) (Escherichia coli O157:H7).